Here is a 1020-residue protein sequence, read N- to C-terminus: C2 and GRAM domain-containing protein At1g03370 (1020 aa).

The 102-residue stretch at 1-102 folds into the C2 1 domain; that stretch reads MKLQVRVVEA…ENQSLGTVWY (102 aa). Residues Asp-17, Asp-23, Asp-69, Asp-71, and Asp-77 each contribute to the Ca(2+) site. 2 stretches are compositionally biased toward polar residues: residues 134–144 and 158–172; these read TSSGDQTSASR and TCASPSRSDDASSIP. The tract at residues 134–172 is disordered; the sequence is TSSGDQTSASRSPDLRLESPIDPSTCASPSRSDDASSIP. Residues 249 to 421 form the VASt 1 domain; sequence SGGVVVDQLF…LLAQSVKPVD (173 aa). A helical membrane pass occupies residues 454 to 474; the sequence is FTVLSTFLIGIYVFVHIVFAI. The C2 2 domain maps to 517–635; it reads QARKQKGSDH…NISDLADVWV (119 aa). 5 residues coordinate Ca(2+): Asp-551, Asp-557, Asp-604, Phe-605, and Asp-606. The GRAM domain maps to 689-752; the sequence is AFQKLFGLPQ…LWEDIEEIQV (64 aa). Positions 848–1010 constitute a VASt 2 domain; sequence RFSEVFSLTL…MTFGFLEKEY (163 aa).

The cofactor is Ca(2+).

The protein resides in the membrane. This Arabidopsis thaliana (Mouse-ear cress) protein is C2 and GRAM domain-containing protein At1g03370.